The chain runs to 227 residues: 2,3-bisphosphoglycerate-dependent phosphoglycerate mutase (227 aa).

Substrate-binding positions include 7-14, 20-21, Arg59, 86-89, Lys97, 113-114, and 182-183; these read RHGFSEWN, TG, ERHY, RR, and GN. His8 functions as the Tele-phosphohistidine intermediate in the catalytic mechanism. Residue Glu86 is the Proton donor/acceptor of the active site.

The protein belongs to the phosphoglycerate mutase family. BPG-dependent PGAM subfamily. In terms of assembly, homodimer.

It carries out the reaction (2R)-2-phosphoglycerate = (2R)-3-phosphoglycerate. It participates in carbohydrate degradation; glycolysis; pyruvate from D-glyceraldehyde 3-phosphate: step 3/5. Functionally, catalyzes the interconversion of 2-phosphoglycerate and 3-phosphoglycerate. The protein is 2,3-bisphosphoglycerate-dependent phosphoglycerate mutase of Haemophilus influenzae (strain 86-028NP).